Reading from the N-terminus, the 484-residue chain is tRNA sulfurtransferase (484 aa).

In terms of domain architecture, THUMP spans 63 to 167; the sequence is REMIERLTCT…DQRLYVIHNQ (105 aa). ATP contacts are provided by residues 185 to 186, Lys-267, Gly-289, and Gln-298; that span reads LM. Cys-346 and Cys-457 are oxidised to a cystine. The region spanning 405-483 is the Rhodanese domain; the sequence is ALPGQIVIDI…GHANVRVYRP (79 aa). The active-site Cysteine persulfide intermediate is the Cys-457.

It belongs to the ThiI family.

The protein resides in the cytoplasm. It carries out the reaction [ThiI sulfur-carrier protein]-S-sulfanyl-L-cysteine + a uridine in tRNA + 2 reduced [2Fe-2S]-[ferredoxin] + ATP + H(+) = [ThiI sulfur-carrier protein]-L-cysteine + a 4-thiouridine in tRNA + 2 oxidized [2Fe-2S]-[ferredoxin] + AMP + diphosphate. The enzyme catalyses [ThiS sulfur-carrier protein]-C-terminal Gly-Gly-AMP + S-sulfanyl-L-cysteinyl-[cysteine desulfurase] + AH2 = [ThiS sulfur-carrier protein]-C-terminal-Gly-aminoethanethioate + L-cysteinyl-[cysteine desulfurase] + A + AMP + 2 H(+). It participates in cofactor biosynthesis; thiamine diphosphate biosynthesis. Its function is as follows. Catalyzes the ATP-dependent transfer of a sulfur to tRNA to produce 4-thiouridine in position 8 of tRNAs, which functions as a near-UV photosensor. Also catalyzes the transfer of sulfur to the sulfur carrier protein ThiS, forming ThiS-thiocarboxylate. This is a step in the synthesis of thiazole, in the thiamine biosynthesis pathway. The sulfur is donated as persulfide by IscS. In Pseudomonas putida (strain ATCC 47054 / DSM 6125 / CFBP 8728 / NCIMB 11950 / KT2440), this protein is tRNA sulfurtransferase.